The primary structure comprises 110 residues: Insulin (110 aa).

A signal peptide spans 1–24; that stretch reads MALWMRLLPLLALLALWGPDPAAA. Cystine bridges form between Cys31/Cys96, Cys43/Cys109, and Cys95/Cys100. The propeptide at 57 to 87 is c peptide; that stretch reads EAEDLQVGQVELGGGPGAGSLQPLALEGSLQ.

The protein belongs to the insulin family. In terms of assembly, heterodimer of a B chain and an A chain linked by two disulfide bonds.

It localises to the secreted. Functionally, insulin decreases blood glucose concentration. It increases cell permeability to monosaccharides, amino acids and fatty acids. It accelerates glycolysis, the pentose phosphate cycle, and glycogen synthesis in liver. The chain is Insulin (INS) from Gorilla gorilla gorilla (Western lowland gorilla).